A 104-amino-acid polypeptide reads, in one-letter code: Iron-sulfur cluster assembly protein CyaY (104 aa).

The protein belongs to the frataxin family.

In terms of biological role, involved in iron-sulfur (Fe-S) cluster assembly. May act as a regulator of Fe-S biogenesis. This is Iron-sulfur cluster assembly protein CyaY from Aeromonas salmonicida (strain A449).